A 91-amino-acid chain; its full sequence is Probable Fe(2+)-trafficking protein (91 aa).

Belongs to the Fe(2+)-trafficking protein family.

Functionally, could be a mediator in iron transactions between iron acquisition and iron-requiring processes, such as synthesis and/or repair of Fe-S clusters in biosynthetic enzymes. The protein is Probable Fe(2+)-trafficking protein of Histophilus somni (strain 129Pt) (Haemophilus somnus).